The following is a 220-amino-acid chain: Deoxyribose-phosphate aldolase (220 aa).

Catalysis depends on Asp-89, which acts as the Proton donor/acceptor. Lys-151 acts as the Schiff-base intermediate with acetaldehyde in catalysis. Lys-180 serves as the catalytic Proton donor/acceptor.

It belongs to the DeoC/FbaB aldolase family. DeoC type 1 subfamily.

The protein resides in the cytoplasm. It catalyses the reaction 2-deoxy-D-ribose 5-phosphate = D-glyceraldehyde 3-phosphate + acetaldehyde. The protein operates within carbohydrate degradation; 2-deoxy-D-ribose 1-phosphate degradation; D-glyceraldehyde 3-phosphate and acetaldehyde from 2-deoxy-alpha-D-ribose 1-phosphate: step 2/2. Its function is as follows. Catalyzes a reversible aldol reaction between acetaldehyde and D-glyceraldehyde 3-phosphate to generate 2-deoxy-D-ribose 5-phosphate. The protein is Deoxyribose-phosphate aldolase of Mycoplasmopsis pulmonis (strain UAB CTIP) (Mycoplasma pulmonis).